A 270-amino-acid polypeptide reads, in one-letter code: Elongation factor Ts (270 aa).

The tract at residues 81 to 84 (TDFV) is involved in Mg(2+) ion dislocation from EF-Tu.

This sequence belongs to the EF-Ts family.

Its subcellular location is the cytoplasm. Its function is as follows. Associates with the EF-Tu.GDP complex and induces the exchange of GDP to GTP. It remains bound to the aminoacyl-tRNA.EF-Tu.GTP complex up to the GTP hydrolysis stage on the ribosome. In Wigglesworthia glossinidia brevipalpis, this protein is Elongation factor Ts.